Reading from the N-terminus, the 51-residue chain is Large ribosomal subunit protein bL33 (51 aa).

Belongs to the bacterial ribosomal protein bL33 family.

In Methylococcus capsulatus (strain ATCC 33009 / NCIMB 11132 / Bath), this protein is Large ribosomal subunit protein bL33.